The sequence spans 238 residues: Ribonuclease PH (238 aa).

Phosphate is bound by residues arginine 86 and 124–126 (GTR).

It belongs to the RNase PH family. As to quaternary structure, homohexameric ring arranged as a trimer of dimers.

It carries out the reaction tRNA(n+1) + phosphate = tRNA(n) + a ribonucleoside 5'-diphosphate. Phosphorolytic 3'-5' exoribonuclease that plays an important role in tRNA 3'-end maturation. Removes nucleotide residues following the 3'-CCA terminus of tRNAs; can also add nucleotides to the ends of RNA molecules by using nucleoside diphosphates as substrates, but this may not be physiologically important. Probably plays a role in initiation of 16S rRNA degradation (leading to ribosome degradation) during starvation. The protein is Ribonuclease PH of Azorhizobium caulinodans (strain ATCC 43989 / DSM 5975 / JCM 20966 / LMG 6465 / NBRC 14845 / NCIMB 13405 / ORS 571).